The primary structure comprises 397 residues: 1-deoxy-D-xylulose 5-phosphate reductoisomerase (397 aa).

The NADPH site is built by Thr-17, Gly-18, Ser-19, Ile-20, Asn-47, and Asn-130. A 1-deoxy-D-xylulose 5-phosphate-binding site is contributed by Lys-131. Glu-132 serves as a coordination point for NADPH. Asp-156 lines the Mn(2+) pocket. Positions 157, 158, 182, and 205 each coordinate 1-deoxy-D-xylulose 5-phosphate. A Mn(2+)-binding site is contributed by Glu-158. Gly-211 provides a ligand contact to NADPH. 4 residues coordinate 1-deoxy-D-xylulose 5-phosphate: Ser-218, Asn-223, Lys-224, and Glu-227. A Mn(2+)-binding site is contributed by Glu-227.

This sequence belongs to the DXR family. Requires Mg(2+) as cofactor. The cofactor is Mn(2+).

It catalyses the reaction 2-C-methyl-D-erythritol 4-phosphate + NADP(+) = 1-deoxy-D-xylulose 5-phosphate + NADPH + H(+). It participates in isoprenoid biosynthesis; isopentenyl diphosphate biosynthesis via DXP pathway; isopentenyl diphosphate from 1-deoxy-D-xylulose 5-phosphate: step 1/6. Functionally, catalyzes the NADPH-dependent rearrangement and reduction of 1-deoxy-D-xylulose-5-phosphate (DXP) to 2-C-methyl-D-erythritol 4-phosphate (MEP). In Rhizobium rhizogenes (strain K84 / ATCC BAA-868) (Agrobacterium radiobacter), this protein is 1-deoxy-D-xylulose 5-phosphate reductoisomerase.